The chain runs to 480 residues: Serine/threonine-protein kinase WAG2 (480 aa).

One can recognise a Protein kinase domain in the interval 88-396 (LKLIRHLGTG…AQDIKRHPFF (309 aa)). Residues 94–102 (LGTGNLGRV) and lysine 117 each bind ATP. Catalysis depends on aspartate 213, which acts as the Proton acceptor.

This sequence belongs to the protein kinase superfamily. Ser/Thr protein kinase family. In terms of tissue distribution, expressed in root tips, lateral root primordia and emerging true leaf primordia.

Its subcellular location is the cytoplasm. The protein localises to the cytosol. The enzyme catalyses L-seryl-[protein] + ATP = O-phospho-L-seryl-[protein] + ADP + H(+). It carries out the reaction L-threonyl-[protein] + ATP = O-phospho-L-threonyl-[protein] + ADP + H(+). Functionally, serine/threonine-protein kinase involved in the regulation of auxin signaling. Acts as a positive regulator of cellular auxin efflux and regulates organ development by enhancing PIN-mediated polar auxin transport. Phosphorylates conserved serine residues in the PIN auxin efflux carriers. Phosphorylation of PIN proteins is required and sufficient for apical-basal PIN polarity that enables directional intercellular auxin fluxes, which mediate differential growth, tissue patterning and organogenesis. Acts as a suppressor of root waving. The polypeptide is Serine/threonine-protein kinase WAG2 (WAG2) (Arabidopsis thaliana (Mouse-ear cress)).